The following is a 418-amino-acid chain: Glutamyl-tRNA reductase (418 aa).

Residues 49 to 52 (TCNR), Ser-109, 114 to 116 (EPQ), and Gln-120 contribute to the substrate site. Cys-50 acts as the Nucleophile in catalysis. 189 to 194 (GAGETI) is an NADP(+) binding site.

It belongs to the glutamyl-tRNA reductase family. In terms of assembly, homodimer.

The enzyme catalyses (S)-4-amino-5-oxopentanoate + tRNA(Glu) + NADP(+) = L-glutamyl-tRNA(Glu) + NADPH + H(+). It functions in the pathway porphyrin-containing compound metabolism; protoporphyrin-IX biosynthesis; 5-aminolevulinate from L-glutamyl-tRNA(Glu): step 1/2. Its function is as follows. Catalyzes the NADPH-dependent reduction of glutamyl-tRNA(Glu) to glutamate 1-semialdehyde (GSA). The sequence is that of Glutamyl-tRNA reductase from Escherichia coli O139:H28 (strain E24377A / ETEC).